A 254-amino-acid chain; its full sequence is tRNA (guanine-N(1)-)-methyltransferase (254 aa).

S-adenosyl-L-methionine contacts are provided by residues glycine 113 and 133-138 (LGDFVL).

Belongs to the RNA methyltransferase TrmD family. As to quaternary structure, homodimer.

Its subcellular location is the cytoplasm. It carries out the reaction guanosine(37) in tRNA + S-adenosyl-L-methionine = N(1)-methylguanosine(37) in tRNA + S-adenosyl-L-homocysteine + H(+). Its function is as follows. Specifically methylates guanosine-37 in various tRNAs. This is tRNA (guanine-N(1)-)-methyltransferase from Herpetosiphon aurantiacus (strain ATCC 23779 / DSM 785 / 114-95).